The following is a 297-amino-acid chain: tRNA pseudouridine synthase B (297 aa).

The active-site Nucleophile is the aspartate 44.

Belongs to the pseudouridine synthase TruB family. Type 1 subfamily.

It catalyses the reaction uridine(55) in tRNA = pseudouridine(55) in tRNA. In terms of biological role, responsible for synthesis of pseudouridine from uracil-55 in the psi GC loop of transfer RNAs. The sequence is that of tRNA pseudouridine synthase B from Corynebacterium glutamicum (strain ATCC 13032 / DSM 20300 / JCM 1318 / BCRC 11384 / CCUG 27702 / LMG 3730 / NBRC 12168 / NCIMB 10025 / NRRL B-2784 / 534).